The primary structure comprises 441 residues: Protein SPMIP7 (441 aa).

As to expression, testis specific. Expressed at the spermatid stage.

Essential for normal spermatogenesis. The protein is Protein SPMIP7 (Spmip7) of Mus musculus (Mouse).